A 347-amino-acid polypeptide reads, in one-letter code: L-threonine 3-dehydrogenase (347 aa).

Cys42 is a binding site for Zn(2+). Residues Thr44 and His47 each act as charge relay system in the active site. Residues His67, Glu68, Cys97, Cys100, Cys103, and Cys111 each contribute to the Zn(2+) site. NAD(+)-binding positions include Ile179, Glu199, Arg204, 266–268, and 291–292; these read LGL and IT.

The protein belongs to the zinc-containing alcohol dehydrogenase family. In terms of assembly, homotetramer. Zn(2+) serves as cofactor.

It is found in the cytoplasm. It carries out the reaction L-threonine + NAD(+) = (2S)-2-amino-3-oxobutanoate + NADH + H(+). It participates in amino-acid degradation; L-threonine degradation via oxydo-reductase pathway; glycine from L-threonine: step 1/2. Its function is as follows. Catalyzes the NAD(+)-dependent oxidation of L-threonine to 2-amino-3-ketobutyrate. This Caldanaerobacter subterraneus subsp. tengcongensis (strain DSM 15242 / JCM 11007 / NBRC 100824 / MB4) (Thermoanaerobacter tengcongensis) protein is L-threonine 3-dehydrogenase.